A 239-amino-acid polypeptide reads, in one-letter code: Serine protease SplC (239 aa).

Residues methionine 1–alanine 36 form the signal peptide. Residues histidine 75, aspartate 113, and serine 193 each act as charge relay system in the active site.

It belongs to the peptidase S1B family.

It localises to the secreted. This Staphylococcus aureus (strain MW2) protein is Serine protease SplC (splC).